Consider the following 511-residue polypeptide: Ribose import ATP-binding protein RbsA 3 (511 aa).

2 ABC transporter domains span residues Leu21 to Asp257 and Arg256 to Ala511. Gly53 to Ser60 lines the ATP pocket.

This sequence belongs to the ABC transporter superfamily. Ribose importer (TC 3.A.1.2.1) family. The complex is composed of an ATP-binding protein (RbsA), two transmembrane proteins (RbsC) and a solute-binding protein (RbsB).

It is found in the cell inner membrane. The enzyme catalyses D-ribose(out) + ATP + H2O = D-ribose(in) + ADP + phosphate + H(+). In terms of biological role, part of the ABC transporter complex RbsABC involved in ribose import. Responsible for energy coupling to the transport system. The chain is Ribose import ATP-binding protein RbsA 3 from Rhizobium etli (strain ATCC 51251 / DSM 11541 / JCM 21823 / NBRC 15573 / CFN 42).